Here is a 207-residue protein sequence, read N- to C-terminus: Twist-related protein 1 (207 aa).

Over residues 1–18 (MMQDVSSSPVSPADDSLS) the composition is skewed to low complexity. The interval 1–110 (MMQDVSSSPV…GGGSPQSYEE (110 aa)) is disordered. Residues 34-43 (RGGRKRRSSR) show a composition bias toward basic residues. Composition is skewed to gly residues over residues 46–65 (AGGG…GGDE) and 80–104 (GCGG…GGGS). Residues 113 to 164 (TQRVMANVRERQRTQSLNEAFAALRKIIPTLPSDKLSKIQTLKLAARYIDFL) form the bHLH domain. The tract at residues 166-196 (QVLQSDELDSKMASCSYVAHERLSYAFSVWR) is sufficient for transactivation activity.

In terms of assembly, efficient DNA binding requires dimerization with another bHLH protein. Homodimer or heterodimer with E proteins such as TCF3. ID1 binds preferentially to TCF3 but does not interact efficiently with TWIST1 so ID1 levels control the amount of TCF3 available to dimerize with TWIST and thus determine the type of dimer formed.

The protein resides in the nucleus. Acts as a transcriptional regulator. Inhibits myogenesis by sequestrating E proteins, inhibiting trans-activation by MEF2, and inhibiting DNA-binding by MYOD1 through physical interaction. This interaction probably involves the basic domains of both proteins. Also represses expression of pro-inflammatory cytokines such as TNFA and IL1B. Regulates cranial suture patterning and fusion. Activates transcription as a heterodimer with E proteins. Regulates gene expression differentially, depending on dimer composition. Homodimers induce expression of FGFR2 and POSTN while heterodimers repress FGFR2 and POSTN expression and induce THBS1 expression. Heterodimerization is also required for osteoblast differentiation. Represses the activity of the circadian transcriptional activator: NPAS2-BMAL1 heterodimer. In Cebus capucinus (White-faced sapajou), this protein is Twist-related protein 1 (TWIST1).